The sequence spans 1310 residues: Vacuolating cytotoxin autotransporter (1310 aa).

A signal peptide spans 1–30 (MEIQQTHRKINRPIISLALVGVLMGTELGA). Positions 339–364 (PEGGYESKTKDNPQNNPKNDAQKTEI) are disordered. The segment covering 350–364 (NPQNNPKNDAQKTEI) has biased composition (polar residues). Residues 1038–1310 (KYEKPTNVWA…ASNLGMRYSF (273 aa)) form the Autotransporter domain.

It is found in the periplasm. The protein localises to the secreted. The protein resides in the cell surface. Its subcellular location is the cell outer membrane. Its function is as follows. Induces vacuolation of eukaryotic cells. Causes ulceration and gastric lesions. In Helicobacter pylori (Campylobacter pylori), this protein is Vacuolating cytotoxin autotransporter (vacA).